The sequence spans 106 residues: Iron-sulfur cluster assembly protein CyaY (106 aa).

It belongs to the frataxin family.

In terms of biological role, involved in iron-sulfur (Fe-S) cluster assembly. May act as a regulator of Fe-S biogenesis. In Escherichia coli O6:H1 (strain CFT073 / ATCC 700928 / UPEC), this protein is Iron-sulfur cluster assembly protein CyaY.